Consider the following 60-residue polypeptide: Ribosome-inactivating protein dianthin-32 (60 aa).

This sequence belongs to the ribosome-inactivating protein family. Type 1 RIP subfamily.

It carries out the reaction Endohydrolysis of the N-glycosidic bond at one specific adenosine on the 28S rRNA.. In terms of biological role, single-chain ribosome-inactivating protein. This chain is Ribosome-inactivating protein dianthin-32, found in Dianthus caryophyllus (Carnation).